Here is a 374-residue protein sequence, read N- to C-terminus: Chaperone protein DnaJ (374 aa).

The J domain maps to 5–70; sequence DYYEVLGVNR…RKRASYDQFG (66 aa). A CR-type zinc finger spans residues 133–210; that stretch reads GLSRTIKVPT…CHGQGRQQQT (78 aa). Residues Cys146, Cys149, Cys162, Cys165, Cys184, Cys187, Cys198, and Cys201 each contribute to the Zn(2+) site. CXXCXGXG motif repeat units lie at residues 146 to 153, 162 to 169, 184 to 191, and 198 to 205; these read CKTCNGSG, CPRCNGSG, CSVCRGRG, and CTDCHGQG.

Belongs to the DnaJ family. As to quaternary structure, homodimer. Requires Zn(2+) as cofactor.

It is found in the cytoplasm. In terms of biological role, participates actively in the response to hyperosmotic and heat shock by preventing the aggregation of stress-denatured proteins and by disaggregating proteins, also in an autonomous, DnaK-independent fashion. Unfolded proteins bind initially to DnaJ; upon interaction with the DnaJ-bound protein, DnaK hydrolyzes its bound ATP, resulting in the formation of a stable complex. GrpE releases ADP from DnaK; ATP binding to DnaK triggers the release of the substrate protein, thus completing the reaction cycle. Several rounds of ATP-dependent interactions between DnaJ, DnaK and GrpE are required for fully efficient folding. Also involved, together with DnaK and GrpE, in the DNA replication of plasmids through activation of initiation proteins. This is Chaperone protein DnaJ from Coxiella burnetii (strain CbuG_Q212) (Coxiella burnetii (strain Q212)).